Consider the following 1405-residue polypeptide: ATP-dependent helicase/nuclease subunit A (1405 aa).

The UvrD-like helicase ATP-binding domain occupies 7-482 (REWTPDQLAA…ILLKANFRSR (476 aa)). 28-35 (AAAGAGKT) is a binding site for ATP. A UvrD-like helicase C-terminal domain is found at 551–914 (PEAVGAGKGG…RVMSIHRAKG (364 aa)). Disordered regions lie at residues 778–797 (QEPW…KAVP) and 1132–1165 (AGKT…QDET). Over residues 787-796 (GPGAAAGKAV) the composition is skewed to low complexity.

The protein belongs to the helicase family. AddA subfamily. In terms of assembly, heterodimer of AddA and AddB/RexB. The cofactor is Mg(2+).

It carries out the reaction Couples ATP hydrolysis with the unwinding of duplex DNA by translocating in the 3'-5' direction.. The enzyme catalyses ATP + H2O = ADP + phosphate + H(+). In terms of biological role, the heterodimer acts as both an ATP-dependent DNA helicase and an ATP-dependent, dual-direction single-stranded exonuclease. Recognizes the chi site generating a DNA molecule suitable for the initiation of homologous recombination. The AddA nuclease domain is required for chi fragment generation; this subunit has the helicase and 3' -&gt; 5' nuclease activities. The polypeptide is ATP-dependent helicase/nuclease subunit A (Moorella thermoacetica (strain ATCC 39073 / JCM 9320)).